A 341-amino-acid polypeptide reads, in one-letter code: Geranylfarnesyl diphosphate synthase (341 aa).

Residues Lys47, Arg50, and Gln95 each contribute to the isopentenyl diphosphate site. Asp102 and Asp106 together coordinate Mg(2+). Arg111 provides a ligand contact to an all-trans-polyprenyl diphosphate. An isopentenyl diphosphate-binding site is contributed by Arg112. 3 residues coordinate an all-trans-polyprenyl diphosphate: Lys193, Thr194, and Gln231.

It belongs to the FPP/GGPP synthase family. In terms of assembly, homodimer. Mg(2+) is required as a cofactor.

It is found in the cytoplasm. It catalyses the reaction isopentenyl diphosphate + (2E,6E,10E)-geranylgeranyl diphosphate = (2E,6E,10E,14E)-geranylfarnesyl diphosphate + diphosphate. Functionally, probably involved in biosynthesis of the precursor for C25 (sesterterpanyl chain) moiety of C20-C25 diether (2-O-sesterterpanyl-3-O-phytanyl-sn-glycer) membrane lipid. Catalyzes the condensation of isopentenyl pyrophosphate with the allylic pyrophosphates to yield geranylfarnesyl diphosphate (GFPP). Geranylgeranyl diphosphate (GGPP) is the preferred substrate, but dimethylallyl diphosphate (DMAPP) and farnesyl diphosphate (FPP) can also be used as allylic substrate. The polypeptide is Geranylfarnesyl diphosphate synthase (idsA3) (Natronomonas pharaonis (strain ATCC 35678 / DSM 2160 / CIP 103997 / JCM 8858 / NBRC 14720 / NCIMB 2260 / Gabara) (Halobacterium pharaonis)).